Reading from the N-terminus, the 317-residue chain is Ribosomal protein L11 methyltransferase (317 aa).

Residues T158, G179, D201, and N244 each contribute to the S-adenosyl-L-methionine site.

The protein belongs to the methyltransferase superfamily. PrmA family.

The protein localises to the cytoplasm. The enzyme catalyses L-lysyl-[protein] + 3 S-adenosyl-L-methionine = N(6),N(6),N(6)-trimethyl-L-lysyl-[protein] + 3 S-adenosyl-L-homocysteine + 3 H(+). Functionally, methylates ribosomal protein L11. In Lactococcus lactis subsp. cremoris (strain MG1363), this protein is Ribosomal protein L11 methyltransferase.